The sequence spans 415 residues: Gamma-glutamyl phosphate reductase (415 aa).

The protein belongs to the gamma-glutamyl phosphate reductase family.

Its subcellular location is the cytoplasm. The enzyme catalyses L-glutamate 5-semialdehyde + phosphate + NADP(+) = L-glutamyl 5-phosphate + NADPH + H(+). The protein operates within amino-acid biosynthesis; L-proline biosynthesis; L-glutamate 5-semialdehyde from L-glutamate: step 2/2. Its function is as follows. Catalyzes the NADPH-dependent reduction of L-glutamate 5-phosphate into L-glutamate 5-semialdehyde and phosphate. The product spontaneously undergoes cyclization to form 1-pyrroline-5-carboxylate. The sequence is that of Gamma-glutamyl phosphate reductase from Ligilactobacillus salivarius (strain UCC118) (Lactobacillus salivarius).